We begin with the raw amino-acid sequence, 397 residues long: MTTLLNPYFGEFGGMYVPQILMPALRQLEEAFVSAQKDPEFQAQFNDLLKNYAGRPTALTKCQNITAGTNTTLYLKREDLLHGGAHKTNQVLGQALLAKRMGKTEIIAETGAGQHGVASALASALLGLKCRIYMGAKDVERQSPNVFRMRLMGAEVIPVHSGSATLKDACNEALRDWSGSYETAHYMLGTAAGPHPYPTIVCEFQRMIGEETKAQILEREGRLPDAVIACVGGGSNAIGMFADFINETNVGLIGVEPGGHGIETGEHGAPLKHGRVGIYFGMKAPMMQTEDGQIEESYSISAGLDFPSVGPQHAYLNSTGRADYVSITDDEALEAFKTLCLHEGIIPALESSHALAHALKMMRETPEKEQLLVVNLSGRGDKDIFTVHDILKARGEI.

Lys87 is modified (N6-(pyridoxal phosphate)lysine).

It belongs to the TrpB family. Tetramer of two alpha and two beta chains. It depends on pyridoxal 5'-phosphate as a cofactor.

It carries out the reaction (1S,2R)-1-C-(indol-3-yl)glycerol 3-phosphate + L-serine = D-glyceraldehyde 3-phosphate + L-tryptophan + H2O. It participates in amino-acid biosynthesis; L-tryptophan biosynthesis; L-tryptophan from chorismate: step 5/5. Its function is as follows. The beta subunit is responsible for the synthesis of L-tryptophan from indole and L-serine. This chain is Tryptophan synthase beta chain, found in Shigella boydii serotype 18 (strain CDC 3083-94 / BS512).